A 227-amino-acid polypeptide reads, in one-letter code: MTKNEYLIEKLQADLANHITELTSAYGEVTIECEVQNLLPVMIELRDREEFSFDQLIDLCGVDYLHYGDYDWETESATEHGFSRGVERQEAKAYAVNKPRFAVVYHLLSTQKNHRLRVKLFVEESHLIVPSVHHLWKSANWFEREAYDLYGILFDGHPDLRRLLTDYGFIGHPFRKDFPLSGEVEMRYDAKLQKVIYAPVDIVPRIVVPKVIRNDNRYIGNEGSKND.

It belongs to the complex I 30 kDa subunit family. As to quaternary structure, NDH-1 is composed of 14 different subunits. Subunits NuoB, C, D, E, F, and G constitute the peripheral sector of the complex.

It localises to the cell inner membrane. It catalyses the reaction a quinone + NADH + 5 H(+)(in) = a quinol + NAD(+) + 4 H(+)(out). Functionally, NDH-1 shuttles electrons from NADH, via FMN and iron-sulfur (Fe-S) centers, to quinones in the respiratory chain. The immediate electron acceptor for the enzyme in this species is believed to be ubiquinone. Couples the redox reaction to proton translocation (for every two electrons transferred, four hydrogen ions are translocated across the cytoplasmic membrane), and thus conserves the redox energy in a proton gradient. The polypeptide is NADH-quinone oxidoreductase subunit C (Legionella pneumophila (strain Corby)).